A 2957-amino-acid chain; its full sequence is Toxin PAU_02230 (2957 aa).

Residues 949–968 are disordered; that stretch reads TSVSPAETAQSTPEPLSDFA. The interval 2115-2144 is membrane localization domain that interacts with the inner leaflet of the plasma membrane; it reads EWFKHSETGLKGGGPIDDIRKYIARKSAIK. Residues 2115–2449 are tyrosine glycosyltransferase PaToxG; the sequence is EWFKHSETGL…TSTIVTPLAP (335 aa). Residues 2169–2171 and 2259–2260 each bind UDP-N-acetyl-alpha-D-glucosamine; these read IWI and SD. Residues Asp-2276 and Asp-2278 each contribute to the a divalent metal cation site. The DxDD motif signature appears at 2276-2279; that stretch reads DIDD. UDP-N-acetyl-alpha-D-glucosamine is bound at residue Asn-2312. A sseI-like deamidase PaToxD region spans residues 2450–2672; that stretch reads KTEMLPPVPS…NYSVNPTAEN (223 aa). Catalysis depends on for deamidase activity residues Cys-2509, His-2547, and Asp-2562. The disordered stretch occupies residues 2667-2705; that stretch reads NPTAENLSPPPPPPIPSHGQVPKTVTPPPPPMRSPLSLS.

A divalent metal cation serves as cofactor.

The protein localises to the secreted. It is found in the host cell membrane. It catalyses the reaction L-tyrosyl-[protein] + UDP-N-acetyl-alpha-D-glucosamine = O-(N-acetyl-alpha-D-glucosaminyl)-L-tyrosyl-[protein] + UDP + H(+). The catalysed reaction is L-glutaminyl-[protein] + H2O = L-glutamyl-[protein] + NH4(+). In terms of biological role, toxin that acts on host cells by modifying Rho proteins by tyrosine GlcNAcylation and heterotrimeric G alpha proteins by deamidation. Catalyzes the mono-O-GlcNAcylation of small GTPases of the Rho family (RhoA, RhoB, RhoC, Rac1, Rac2, Rac3, Cdc42) in eukaryotic host cells at the conserved tyrosine residue located in the switch I region (Tyr-32/34), using UDP-N-acetylglucosamine (UDP-GlcNAc) as the sugar donor; other GTPases of the Rho, Ras or Rab families are not substrates. Tyrosine glycosylation inhibits Rho activation and prevents interaction with downstream effectors, resulting in actin disassembly, inhibition of phagocytosis, cell rounding, and toxicity toward insects and mammalian cells. Also catalyzes the deamidation of the catalytic glutamine in heterotrimeric G alpha proteins (Gi, Gq/11), which blocks GTP hydrolysis and arrests the G proteins in a permanent active state leading to activation of Rho GTPases. Thus, PaTox hijacks host GTPase signaling in a bidirectional manner by deamidation-induced activation and glycosylation-induced inactivation of GTPases. This is Toxin PAU_02230 from Photorhabdus asymbiotica subsp. asymbiotica (strain ATCC 43949 / 3105-77) (Xenorhabdus luminescens (strain 2)).